Reading from the N-terminus, the 276-residue chain is Tryptophan synthase alpha chain (276 aa).

Active-site proton acceptor residues include Glu55 and Asp66.

This sequence belongs to the TrpA family. As to quaternary structure, tetramer of two alpha and two beta chains.

It carries out the reaction (1S,2R)-1-C-(indol-3-yl)glycerol 3-phosphate + L-serine = D-glyceraldehyde 3-phosphate + L-tryptophan + H2O. Its pathway is amino-acid biosynthesis; L-tryptophan biosynthesis; L-tryptophan from chorismate: step 5/5. In terms of biological role, the alpha subunit is responsible for the aldol cleavage of indoleglycerol phosphate to indole and glyceraldehyde 3-phosphate. This chain is Tryptophan synthase alpha chain, found in Gloeobacter violaceus (strain ATCC 29082 / PCC 7421).